The sequence spans 158 residues: Phosphopantetheine adenylyltransferase (158 aa).

Residue Thr8 participates in substrate binding. Residues 8–9 and His16 each bind ATP; that span reads TF. 3 residues coordinate substrate: Lys40, Leu72, and Arg86. Residues 87–89, Glu97, and 122–128 each bind ATP; these read GLR and HAFISSS.

It belongs to the bacterial CoaD family. As to quaternary structure, homohexamer. Mg(2+) is required as a cofactor.

The protein resides in the cytoplasm. It carries out the reaction (R)-4'-phosphopantetheine + ATP + H(+) = 3'-dephospho-CoA + diphosphate. It functions in the pathway cofactor biosynthesis; coenzyme A biosynthesis; CoA from (R)-pantothenate: step 4/5. Its function is as follows. Reversibly transfers an adenylyl group from ATP to 4'-phosphopantetheine, yielding dephospho-CoA (dPCoA) and pyrophosphate. The polypeptide is Phosphopantetheine adenylyltransferase (Campylobacter jejuni subsp. jejuni serotype O:6 (strain 81116 / NCTC 11828)).